The sequence spans 272 residues: Ethanolamine ammonia-lyase small subunit (272 aa).

3 residues coordinate adenosylcob(III)alamin: V161, E182, and C211.

It belongs to the EutC family. In terms of assembly, the basic unit is a heterodimer which dimerizes to form tetramers. The heterotetramers trimerize; 6 large subunits form a core ring with 6 small subunits projecting outwards. Requires adenosylcob(III)alamin as cofactor.

Its subcellular location is the bacterial microcompartment. The enzyme catalyses ethanolamine = acetaldehyde + NH4(+). It functions in the pathway amine and polyamine degradation; ethanolamine degradation. Catalyzes the deamination of various vicinal amino-alcohols to oxo compounds. Allows this organism to utilize ethanolamine as the sole source of nitrogen and carbon in the presence of external vitamin B12. The protein is Ethanolamine ammonia-lyase small subunit of Xanthomonas campestris pv. campestris (strain B100).